Consider the following 1388-residue polypeptide: Collagen alpha-1(XV) chain (1388 aa).

Positions 1–27 are cleaved as a signal peptide; that stretch reads MAPRRNNGQCWCLLMLLSVSTPLPAVT. In terms of domain architecture, Laminin G-like spans 66–249; it reads AYSFGPGANV…SSASGETSGL (184 aa). A disordered region spans residues 223–250; the sequence is TVHPDPRTPEELCDPEESSASGETSGLQ. Positions 229–555 are nonhelical region 1 (NC1); the sequence is RTPEELCDPE…WITPAQREHV (327 aa). Polar residues predominate over residues 240 to 249; sequence SSASGETSGL. S243 and S247 each carry an O-linked (Xyl...) (chondroitin sulfate) serine glycan. T265 is a glycosylation site (O-linked (GalNAc...) threonine). A disordered region spans residues 266–301; it reads QASPKEAKVEPINTPPTPSSPFEDMELSGEPVPEGT. Residues N306 and N324 are each glycosylated (N-linked (GlcNAc...) asparagine). An O-linked (Xyl...) (chondroitin sulfate) serine glycan is attached at S343. Tandem repeats lie at residues 358–408, 409–459, 460–509, and 510–555. Residues 358-555 are 4 X tandem repeats; the sequence is AATAAGLAEV…WITPAQREHV (198 aa). The tract at residues 371–795 is disordered; it reads TAGEAEASSV…VGPPGPRGPP (425 aa). Positions 379–392 are enriched in polar residues; it reads SVPTGGPTLSMSTE. A compositionally biased stretch (low complexity) spans 409 to 420; the sequence is AATAAGEAEALA. A compositionally biased stretch (polar residues) spans 452-472; sequence GPSSEDSLTTAAAATEVSLST. A compositionally biased stretch (low complexity) spans 510 to 527; the sequence is AAATTEEPLITAGGEESG. The span at 528-540 shows a compositional bias: pro residues; it reads SPPPDGPPLPLPT. A triple-helical region 1 (COL1) region spans residues 556–573; that stretch reads GMKGQAGPKGEKGDAGEE. The interval 574-618 is nonhelical region 2 (NC2); the sequence is LPGPPEPSGPVGPTAGAEAEGSGLGWGSDVGSGSGDLVGSEQLLR. Residues 595–609 show a composition bias toward gly residues; the sequence is SGLGWGSDVGSGSGD. Collagen-like domains follow at residues 619–680 and 681–731; these read GPPG…MKGE and KGAR…PPGP. The segment at 619 to 732 is triple-helical region 2 (COL2); sequence GPPGPPGPPG…PGPPGPPGPG (114 aa). The span at 620–630 shows a compositional bias: pro residues; it reads PPGPPGPPGLP. A glycan (N-linked (GlcNAc...) asparagine) is linked at N687. Residues 716–731 are compositionally biased toward pro residues; sequence VMGPPGPPGPPGPPGP. The interval 733–763 is nonhelical region 3 (NC3); that stretch reads CTMGLGFEDTEGSGSTQLLNEPKLSRPTAAI. S745 carries an O-linked (Xyl...) (chondroitin sulfate) serine glycan. The interval 764 to 798 is triple-helical region 3 (COL3); the sequence is GLKGEKGDRGPKGERGMDGASIVGPPGPRGPPGHI. Residues 766–780 show a composition bias toward basic and acidic residues; sequence KGEKGDRGPKGERGM. Residues 799–822 form a nonhelical region 4 (NC4) region; it reads KVLSNSLINITHGFMNFSDIPELV. N-linked (GlcNAc...) asparagine glycosylation is found at N807 and N814. The region spanning 823–865 is the Collagen-like 3 domain; it reads GPPGPDGLPGLPGFPGPRGPKGDTGLPGFPGLKGEQGEKGEPG. The triple-helical region 4 (COL4) stretch occupies residues 823–867; the sequence is GPPGPDGLPGLPGFPGPRGPKGDTGLPGFPGLKGEQGEKGEPGAI. Over residues 827–840 the composition is skewed to pro residues; the sequence is PDGLPGLPGFPGPR. The disordered stretch occupies residues 827 to 864; that stretch reads PDGLPGLPGFPGPRGPKGDTGLPGFPGLKGEQGEKGEP. Positions 868–878 are nonhelical region 5 (NC5); the sequence is LTEDIPLERLM. The Collagen-like 4 domain maps to 879 to 927; it reads GKKGEPGMHGAPGPMGPKGPPGHKGEFGLPGRPGRPGLNGLKGTKGDPG. The tract at residues 879-949 is triple-helical region 5 (COL5); it reads GKKGEPGMHG…PGPPGPPGAV (71 aa). The nonhelical region 6 (NC6) stretch occupies residues 950–983; the sequence is INIKGAIFPIPVRPHCKMPVDTAHPGSPELITFH. A triple-helical region 6 (COL6) region spans residues 984–1013; that stretch reads GVKGEKGSWGLPGSKGEKGDQGAQGPPGPP. 2 disordered regions span residues 988-1016 and 1029-1133; these read EKGS…PLDL and ENGD…GSRN. The interval 1014–1027 is nonhelical region 7 (NC7); that stretch reads LDLAYLRHFLNNLK. The tract at residues 1028 to 1045 is triple-helical region 7 (COL7); the sequence is GENGDKGFKGEKGEKGDI. Residues 1029–1044 show a composition bias toward basic and acidic residues; that stretch reads ENGDKGFKGEKGEKGD. N-linked (GlcNAc...) asparagine glycosylation occurs at N1046. A nonhelical region 8 (NC8) region spans residues 1046–1052; sequence NGSFLMS. The triple-helical region 8 (COL8) stretch occupies residues 1053-1107; it reads GPPGLPGNPGPAGQKGETVVGPQGPPGAPGLPGPPGFGRPGDPGPPGPPGPPGPP. 2 stretches are compositionally biased toward pro residues: residues 1075-1107 and 1117-1126; these read QGPP…PGPP and PGPPGPPGQP. Positions 1108–1117 are nonhelical region 9 (NC9); that stretch reads AILGAAVALP. The triple-helical region 9 (COL9) stretch occupies residues 1118–1132; it reads GPPGPPGQPGLPGSR. The segment at 1133–1388 is nonhelical region 10 (NC10); the sequence is NLVTAFSNMD…ENSFMTDARK (256 aa). Cystine bridges form between C1237–C1377 and C1339–C1369.

This sequence belongs to the multiplexin collagen family. In terms of assembly, trimer; disulfide-linked. As to quaternary structure, interacts moderately with EFEMP2. Post-translationally, prolines at the third position of the tripeptide repeating unit (G-X-Y) are hydroxylated in some or all of the chains. In terms of processing, O-glycosylated; with core 1 or possibly core 8 glycans. Contains chondroitin sulfate. As to expression, detected in fibroblasts and urine (at protein level). Detected in placenta (at protein level). Expressed predominantly in internal organs such as adrenal gland, pancreas and kidney.

It localises to the secreted. It is found in the extracellular space. The protein resides in the extracellular matrix. Functionally, structural protein that stabilizes microvessels and muscle cells, both in heart and in skeletal muscle. Its function is as follows. Restin potently inhibits angiogenesis. This chain is Collagen alpha-1(XV) chain (COL15A1), found in Homo sapiens (Human).